A 79-amino-acid chain; its full sequence is Acyl carrier protein (79 aa).

The 76-residue stretch at 2–77 folds into the Carrier domain; that stretch reads SEVAEKVKKI…DAIDYIEKKK (76 aa). Position 37 is an O-(pantetheine 4'-phosphoryl)serine (S37).

This sequence belongs to the acyl carrier protein (ACP) family. 4'-phosphopantetheine is transferred from CoA to a specific serine of apo-ACP by AcpS. This modification is essential for activity because fatty acids are bound in thioester linkage to the sulfhydryl of the prosthetic group.

It localises to the cytoplasm. Its pathway is lipid metabolism; fatty acid biosynthesis. Carrier of the growing fatty acid chain in fatty acid biosynthesis. The protein is Acyl carrier protein of Acidiphilium cryptum (strain JF-5).